We begin with the raw amino-acid sequence, 240 residues long: UDP-2,3-diacylglucosamine hydrolase (240 aa).

Mn(2+)-binding residues include aspartate 8, histidine 10, aspartate 41, asparagine 78, and histidine 113. 78 to 79 lines the substrate pocket; it reads NR. Substrate is bound by residues aspartate 121, serine 159, asparagine 163, lysine 166, and histidine 194. The Mn(2+) site is built by histidine 194 and histidine 196.

Belongs to the LpxH family. Mn(2+) serves as cofactor.

The protein resides in the cell inner membrane. It catalyses the reaction UDP-2-N,3-O-bis[(3R)-3-hydroxytetradecanoyl]-alpha-D-glucosamine + H2O = 2-N,3-O-bis[(3R)-3-hydroxytetradecanoyl]-alpha-D-glucosaminyl 1-phosphate + UMP + 2 H(+). It functions in the pathway glycolipid biosynthesis; lipid IV(A) biosynthesis; lipid IV(A) from (3R)-3-hydroxytetradecanoyl-[acyl-carrier-protein] and UDP-N-acetyl-alpha-D-glucosamine: step 4/6. Its function is as follows. Hydrolyzes the pyrophosphate bond of UDP-2,3-diacylglucosamine to yield 2,3-diacylglucosamine 1-phosphate (lipid X) and UMP by catalyzing the attack of water at the alpha-P atom. Involved in the biosynthesis of lipid A, a phosphorylated glycolipid that anchors the lipopolysaccharide to the outer membrane of the cell. In Shewanella baltica (strain OS155 / ATCC BAA-1091), this protein is UDP-2,3-diacylglucosamine hydrolase.